Here is a 421-residue protein sequence, read N- to C-terminus: MKLLVVGSGGREHAIAKKLLASKGVDQVFVAPGNDGMTLDGLDLVNIVVSEHSRLIAFAKENEISWAFIGPDDALAAGIVDDFNSAGLRAFGPTKAAAELEWSKDFAKEIMVKYNVPTAAYGTFSDFEKAKAYIEEQGAPIVVKADGLALGKGVVVAETVEQAVEAAQEMLLDNKFGDSGARVVIEEFLDGEEFSLFAFVNGDKFYIMPTAQDHKRAFDGDKGPNTGGMGAYAPVPHLPQSVVDTAVETIVRPVLEGMVAEGRPYLGVLYVGLILTADGPKVIEFNLRFGDPETQIILPRLTSDFAQNIDDIMMGIEPYITWQNDGVTLGVVVASEGYPLDYEKGVPLPEKTDGDIITYYAGAKFAENSKALLSNGGRVYMLVTTEDSVKAGQDKIYTQLAQQDTTGLFYRNDIGSKAIRE.

The ATP-grasp domain occupies 108-314 (KEIMVKYNVP…FAQNIDDIMM (207 aa)). 134-195 (IEEQGAPIVV…EEFLDGEEFS (62 aa)) contacts ATP. Mg(2+) is bound by residues Glu-284 and Asn-286.

This sequence belongs to the GARS family. It depends on Mg(2+) as a cofactor. Requires Mn(2+) as cofactor.

It carries out the reaction 5-phospho-beta-D-ribosylamine + glycine + ATP = N(1)-(5-phospho-beta-D-ribosyl)glycinamide + ADP + phosphate + H(+). It functions in the pathway purine metabolism; IMP biosynthesis via de novo pathway; N(1)-(5-phospho-D-ribosyl)glycinamide from 5-phospho-alpha-D-ribose 1-diphosphate: step 2/2. The protein is Phosphoribosylamine--glycine ligase of Streptococcus pyogenes serotype M18 (strain MGAS8232).